A 328-amino-acid chain; its full sequence is MNIYDLIVLGAGTSGIYCASYGAMKGLSSLVIEMTDRIGGQPAHVYPFKKIYDFPTANGILAKDFVDQLYQQQKPYITQGLITYLHNTTIQEQNYLDDQQLFELKLSDNQHVKAKKIILATGNGGFEPIKLKDELIQDQNLDCIHYKINDLTQYQNKDLCFLGGGDSAVELINQLADLKIAKSLSIIHRNHKYRAAQALVDLINKKPINQYLDQTIELIKDNKISFKDNQSGESTQLNFDYLIVQYGLKPLKSLECFDHLEQDLNNNFVINHHHQTSDPNIYAIGLASNFSKRPNLILSGMYEATVAIKHINDTINPYLRATDYLLKE.

6 residues coordinate FAD: serine 14, glutamate 33, glutamine 41, tyrosine 46, isoleucine 90, and phenylalanine 126.

The protein belongs to the ferredoxin--NADP reductase type 2 family. Homodimer. FAD serves as cofactor.

It carries out the reaction 2 reduced [2Fe-2S]-[ferredoxin] + NADP(+) + H(+) = 2 oxidized [2Fe-2S]-[ferredoxin] + NADPH. The polypeptide is Ferredoxin--NADP reductase (Mycoplasmoides gallisepticum (strain R(low / passage 15 / clone 2)) (Mycoplasma gallisepticum)).